Reading from the N-terminus, the 440-residue chain is Ribosomal protein uS12 methylthiotransferase RimO (440 aa).

Residues 5 to 115 enclose the MTTase N-terminal domain; the sequence is PTVGFVSLGC…VVNAVHEVVP (111 aa). Cysteine 14, cysteine 50, cysteine 79, cysteine 148, cysteine 152, and cysteine 155 together coordinate [4Fe-4S] cluster. In terms of domain architecture, Radical SAM core spans 134–372; the sequence is LTPRHYAYLK…MAHQQAISAA (239 aa). Positions 375–440 constitute a TRAM domain; the sequence is QLKVGKELDV…DEYDLWAEVI (66 aa).

It belongs to the methylthiotransferase family. RimO subfamily. [4Fe-4S] cluster is required as a cofactor.

The protein localises to the cytoplasm. The enzyme catalyses L-aspartate(89)-[ribosomal protein uS12]-hydrogen + (sulfur carrier)-SH + AH2 + 2 S-adenosyl-L-methionine = 3-methylsulfanyl-L-aspartate(89)-[ribosomal protein uS12]-hydrogen + (sulfur carrier)-H + 5'-deoxyadenosine + L-methionine + A + S-adenosyl-L-homocysteine + 2 H(+). Its function is as follows. Catalyzes the methylthiolation of an aspartic acid residue of ribosomal protein uS12. This chain is Ribosomal protein uS12 methylthiotransferase RimO, found in Stutzerimonas stutzeri (strain A1501) (Pseudomonas stutzeri).